A 1008-amino-acid polypeptide reads, in one-letter code: PAN2-PAN3 deadenylation complex catalytic subunit PAN2 (1008 aa).

5 WD repeats span residues 29–68, 110–149, 158–198, 200–236, and 277–316; these read GQLT…PYSR, PSLG…VTRV, HMAG…FSDV, VQDN…AMAP, and AEVA…SFAE. Positions 314-449 are linker; it reads FAEFSAPTAF…TCTEASMSSK (136 aa). One can recognise a USP domain in the interval 450-755; the sequence is KVPRLYRKLE…RTVMMVYAVG (306 aa). The region spanning 808–976 is the Exonuclease domain; that stretch reads AIDAEFVVLK…EDSHTALLLY (169 aa). The a divalent metal cation site is built by Asp-810, Glu-812, Asp-915, and Asp-968.

Belongs to the peptidase C19 family. PAN2 subfamily. In terms of assembly, forms a heterotrimer with an asymmetric homodimer of the regulatory subunit PAN3 to form the poly(A)-nuclease (PAN) deadenylation complex. A divalent metal cation is required as a cofactor.

It is found in the cytoplasm. It catalyses the reaction Exonucleolytic cleavage of poly(A) to 5'-AMP.. Its activity is regulated as follows. Positively regulated by the regulatory subunit PAN3. Catalytic subunit of the poly(A)-nuclease (PAN) deadenylation complex, one of two cytoplasmic mRNA deadenylases involved in mRNA turnover. PAN specifically shortens poly(A) tails of RNA and the activity is stimulated by poly(A)-binding protein PAB1. PAN deadenylation is followed by rapid degradation of the shortened mRNA tails by the CCR4-NOT complex. Deadenylated mRNAs are then degraded by two alternative mechanisms, namely exosome-mediated 3'-5' exonucleolytic degradation, or deadenylation-dependent mRNA decaping and subsequent 5'-3' exonucleolytic degradation by XRN1. May also be involved in post-transcriptional maturation of mRNA poly(A) tails. This chain is PAN2-PAN3 deadenylation complex catalytic subunit PAN2, found in Yarrowia lipolytica (strain CLIB 122 / E 150) (Yeast).